A 103-amino-acid chain; its full sequence is CLAVATA3/ESR (CLE)-related protein 16 (103 aa).

Positions 1 to 21 (MEACSRKRRRRRAYTTSTTGY) are cleaved as a signal peptide. The interval 71–103 (VSFTGQRREEENRDEVYKDDKRLVHTGPNPLHN) is disordered. Residues 76–93 (QRREEENRDEVYKDDKRL) are compositionally biased toward basic and acidic residues. Pro98 carries the post-translational modification Hydroxyproline. Pro98 carries an O-linked (Ara...) hydroxyproline glycan.

Belongs to the CLV3/ESR signal peptide family. The O-glycosylation (arabinosylation) of the hydroxyproline Pro-98 enhances binding affinity of the CLE16p peptide for its receptor. In terms of tissue distribution, expressed in roots, stems, apex, seedlings, leaves, flowers and siliques.

It is found in the secreted. The protein resides in the extracellular space. Functionally, extracellular signal peptide that regulates cell fate. Represses root apical meristem maintenance. Regulates the transition of protophloem cells from proliferation to differentiation, thus impinging on postembryonic growth capacity of the root meristem; this signaling pathway requires CRN and CLV2. In Arabidopsis thaliana (Mouse-ear cress), this protein is CLAVATA3/ESR (CLE)-related protein 16.